Reading from the N-terminus, the 737-residue chain is Dipeptidyl peptidase 3 (737 aa).

Ala-2 carries the N-acetylalanine modification. His-450 provides a ligand contact to Zn(2+). The active site involves Glu-451. Zn(2+) contacts are provided by His-455 and Glu-508.

Belongs to the peptidase M49 family. The cofactor is Zn(2+). Detected in placenta (at protein level). Detected in erythrocytes (at protein level).

It localises to the cytoplasm. Its subcellular location is the cytosol. It catalyses the reaction Release of an N-terminal dipeptide from a peptide comprising four or more residues, with broad specificity. Also acts on dipeptidyl 2-naphthylamides.. Activated by Co(2+). Inhibited by EDTA and o-phenanthroline (in vitro). In terms of biological role, cleaves and degrades bioactive peptides, including angiotensin, Leu-enkephalin and Met-enkephalin. Also cleaves Arg-Arg-beta-naphthylamide (in vitro). The protein is Dipeptidyl peptidase 3 (DPP3) of Homo sapiens (Human).